Consider the following 410-residue polypeptide: BTB and MATH domain-containing protein 42 (410 aa).

Residues 1–19 (MSSRSSWSSTEQINRTISS) are compositionally biased toward polar residues. The tract at residues 1-29 (MSSRSSWSSTEQINRTISSRADDLPPQPR) is disordered. An MATH domain is found at 45–173 (STKLEWKIEQ…DGTLFLICEV (129 aa)). Positions 219-287 (TDCVIHVGNK…MYTGATESLE (69 aa)) constitute a BTB domain. Residues 389–410 (TSNIPISVSPPPARKRLRRSAK) form a disordered region. Positions 401-410 (ARKRLRRSAK) are enriched in basic residues.

Interacts with cul-3.

It participates in protein modification; protein ubiquitination. In terms of biological role, probable substrate-specific adapter of an E3 ubiquitin-protein ligase complex which mediates the ubiquitination and subsequent proteasomal degradation of target proteins. This Caenorhabditis elegans protein is BTB and MATH domain-containing protein 42 (bath-42).